We begin with the raw amino-acid sequence, 249 residues long: AA9 family lytic polysaccharide monooxygenase A (249 aa).

The first 19 residues, 1 to 19 (MRGPLCFTLIAIAVTSVVA), serve as a signal peptide directing secretion. Cu(2+) is bound by residues histidine 20 and histidine 97. The cysteines at positions 60 and 183 are disulfide-linked. Histidine 163 contributes to the O2 binding site. Residue tyrosine 180 participates in Cu(2+) binding.

It belongs to the polysaccharide monooxygenase AA9 family. Cu(2+) is required as a cofactor.

Its subcellular location is the secreted. The enzyme catalyses [(1-&gt;4)-beta-D-glucosyl]n+m + reduced acceptor + O2 = 4-dehydro-beta-D-glucosyl-[(1-&gt;4)-beta-D-glucosyl]n-1 + [(1-&gt;4)-beta-D-glucosyl]m + acceptor + H2O.. Functionally, lytic polysaccharide monooxygenase (LPMO) that depolymerizes crystalline and amorphous polysaccharides via the oxidation of scissile alpha- or beta-(1-4)-glycosidic bonds, yielding C4 oxidation products. Catalysis by LPMOs requires the reduction of the active-site copper from Cu(II) to Cu(I) by a reducing agent and H(2)O(2) or O(2) as a cosubstrate. Active on cellulose and cello-oligosaccharides, as well as plant cell wall-derived hemicellulosic polysaccharides. Also active on cello-oligosaccharides such as cellohexaose, cellopentaose or cellotetraose. This Armillaria gallica (Bulbous honey fungus) protein is AA9 family lytic polysaccharide monooxygenase A.